Consider the following 397-residue polypeptide: Elongation factor Tu (397 aa).

Residues 10 to 207 form the tr-type G domain; the sequence is KPHVNIGTIG…ACDSYIPEPE (198 aa). Residues 19–26 are G1; sequence GHIDHGKT. 19-26 contributes to the GTP binding site; sequence GHIDHGKT. T26 contributes to the Mg(2+) binding site. Residues 60 to 64 are G2; sequence GITIA. Residues 81-84 form a G3 region; that stretch reads DCPG. GTP is bound by residues 81-85 and 136-139; these read DCPGH and NKCD. Residues 136-139 form a G4 region; that stretch reads NKCD. A G5 region spans residues 174-176; the sequence is SAL.

This sequence belongs to the TRAFAC class translation factor GTPase superfamily. Classic translation factor GTPase family. EF-Tu/EF-1A subfamily. As to quaternary structure, monomer.

The protein resides in the cytoplasm. The enzyme catalyses GTP + H2O = GDP + phosphate + H(+). In terms of biological role, GTP hydrolase that promotes the GTP-dependent binding of aminoacyl-tRNA to the A-site of ribosomes during protein biosynthesis. This is Elongation factor Tu from Oleidesulfovibrio alaskensis (strain ATCC BAA-1058 / DSM 17464 / G20) (Desulfovibrio alaskensis).